The primary structure comprises 49 residues: U-theraphotoxin-Lk2a (49 aa).

Cystine bridges form between C4/C17, C8/C41, C22/C24, and C35/C46.

Belongs to the neurotoxin 12 (Hwtx-2) family. 04 (lasiotoxin) subfamily. Expressed by the venom gland.

It localises to the secreted. Functionally, toxin that causes irreversible contractile paralysis into adult Aedes aegypti resulting in 100% mortality after 24 hours. The sequence is that of U-theraphotoxin-Lk2a from Lasiodora klugi (Bahia scarlet tarantula).